Reading from the N-terminus, the 264-residue chain is S-adenosylmethionine decarboxylase proenzyme (264 aa).

The active-site Schiff-base intermediate with substrate; via pyruvic acid is serine 112. Serine 112 carries the post-translational modification Pyruvic acid (Ser); by autocatalysis. The active-site Proton acceptor; for processing activity is the histidine 117. The active-site Proton donor; for catalytic activity is cysteine 140.

The protein belongs to the prokaryotic AdoMetDC family. Type 2 subfamily. Heterooctamer of four alpha and four beta chains arranged as a tetramer of alpha/beta heterodimers. It depends on pyruvate as a cofactor. Post-translationally, is synthesized initially as an inactive proenzyme. Formation of the active enzyme involves a self-maturation process in which the active site pyruvoyl group is generated from an internal serine residue via an autocatalytic post-translational modification. Two non-identical subunits are generated from the proenzyme in this reaction, and the pyruvate is formed at the N-terminus of the alpha chain, which is derived from the carboxyl end of the proenzyme. The post-translation cleavage follows an unusual pathway, termed non-hydrolytic serinolysis, in which the side chain hydroxyl group of the serine supplies its oxygen atom to form the C-terminus of the beta chain, while the remainder of the serine residue undergoes an oxidative deamination to produce ammonia and the pyruvoyl group blocking the N-terminus of the alpha chain.

The enzyme catalyses S-adenosyl-L-methionine + H(+) = S-adenosyl 3-(methylsulfanyl)propylamine + CO2. The protein operates within amine and polyamine biosynthesis; S-adenosylmethioninamine biosynthesis; S-adenosylmethioninamine from S-adenosyl-L-methionine: step 1/1. Its function is as follows. Catalyzes the decarboxylation of S-adenosylmethionine to S-adenosylmethioninamine (dcAdoMet), the propylamine donor required for the synthesis of the polyamines spermine and spermidine from the diamine putrescine. This is S-adenosylmethionine decarboxylase proenzyme from Salmonella choleraesuis (strain SC-B67).